Reading from the N-terminus, the 384-residue chain is Protein RecA (384 aa).

76 to 83 serves as a coordination point for ATP; sequence GPESSGKT. Residues 346–365 form a disordered region; sequence QGSAEPEKAAKPEKVEKADK. The segment covering 350–365 has biased composition (basic and acidic residues); sequence EPEKAAKPEKVEKADK.

This sequence belongs to the RecA family.

Its subcellular location is the cytoplasm. Can catalyze the hydrolysis of ATP in the presence of single-stranded DNA, the ATP-dependent uptake of single-stranded DNA by duplex DNA, and the ATP-dependent hybridization of homologous single-stranded DNAs. It interacts with LexA causing its activation and leading to its autocatalytic cleavage. The polypeptide is Protein RecA (Polaromonas naphthalenivorans (strain CJ2)).